The following is a 599-amino-acid chain: Aspartate--tRNA(Asp/Asn) ligase (599 aa).

Glutamate 172 contributes to the L-aspartate binding site. The tract at residues 196 to 199 (QLFK) is aspartate. Residue arginine 218 participates in L-aspartate binding. ATP is bound by residues 218–220 (RDE) and glutamine 227. Position 451 (histidine 451) interacts with L-aspartate. Residue glutamate 485 participates in ATP binding. Arginine 492 is a binding site for L-aspartate. 537–540 (GLDR) contacts ATP.

Belongs to the class-II aminoacyl-tRNA synthetase family. Type 1 subfamily. Homodimer.

It is found in the cytoplasm. The catalysed reaction is tRNA(Asx) + L-aspartate + ATP = L-aspartyl-tRNA(Asx) + AMP + diphosphate. Functionally, aspartyl-tRNA synthetase with relaxed tRNA specificity since it is able to aspartylate not only its cognate tRNA(Asp) but also tRNA(Asn). Reaction proceeds in two steps: L-aspartate is first activated by ATP to form Asp-AMP and then transferred to the acceptor end of tRNA(Asp/Asn). This is Aspartate--tRNA(Asp/Asn) ligase from Dechloromonas aromatica (strain RCB).